The primary structure comprises 543 residues: 2,3-bisphosphoglycerate-independent phosphoglycerate mutase (543 aa).

Mn(2+) contacts are provided by Asp24 and Ser74. The Phosphoserine intermediate role is filled by Ser74. Substrate contacts are provided by residues His135, 165–166, Arg197, Arg203, 268–271, and Lys341; these read RD and RPDR. Asp408, His412, Asp449, His450, and His467 together coordinate Mn(2+).

It belongs to the BPG-independent phosphoglycerate mutase family. As to quaternary structure, monomer. Mn(2+) serves as cofactor.

The enzyme catalyses (2R)-2-phosphoglycerate = (2R)-3-phosphoglycerate. It functions in the pathway carbohydrate degradation; glycolysis; pyruvate from D-glyceraldehyde 3-phosphate: step 3/5. Its function is as follows. Catalyzes the interconversion of 2-phosphoglycerate and 3-phosphoglycerate. This Parasynechococcus marenigrum (strain WH8102) protein is 2,3-bisphosphoglycerate-independent phosphoglycerate mutase.